The primary structure comprises 140 residues: Ribosome maturation factor RimP (140 aa).

It belongs to the RimP family.

The protein resides in the cytoplasm. Required for maturation of 30S ribosomal subunits. The protein is Ribosome maturation factor RimP of Campylobacter fetus subsp. fetus (strain 82-40).